A 330-amino-acid chain; its full sequence is MPHSVTLRGPSPWGFRLVGGRDFSAPLTISRVHAGSKAALAALCPGDLIQAINGESTELMTHLEAQNRIKGCHDHLTLSVSRPEGRSWPSAPDDSKAQAHRIHIDPEIQDGSPTTSRRPSGTGTGPEDGRPSLGSPYGQPPRFPVPHNGSSEATLPAQMSTLHVSPPPSADPARGLPRSRDCRVDLGSEVYRMLREPAEPVAAEPKQSGSFRYLQGMLEAGEGGDWPGPGGPRNLKPTASKLGAPLSGLQGLPECTRCGHGIVGTIVKARDKLYHPECFMCSDCGLNLKQRGYFFLDERLYCESHAKARVKPPEGYDVVAVYPNAKVELV.

A PDZ domain is found at 1 to 84; it reads MPHSVTLRGP…HLTLSVSRPE (84 aa). Residues 104–180 form a disordered region; the sequence is IDPEIQDGSP…DPARGLPRSR (77 aa). Residues 111-121 are compositionally biased toward low complexity; the sequence is GSPTTSRRPSG. Phosphoserine is present on residues Ser-112, Ser-116, Ser-120, and Ser-135. Residues 148–163 show a composition bias toward polar residues; that stretch reads NGSSEATLPAQMSTLH. In terms of domain architecture, LIM zinc-binding spans 253 to 312; it reads PECTRCGHGIVGTIVKARDKLYHPECFMCSDCGLNLKQRGYFFLDERLYCESHAKARVKP.

As to quaternary structure, homodimer. Interacts with PTPN13. Interacts (via C-terminus only or via combined C-terminus and LIM domain, but not LIM domain only) with PTPN13 (via the second or fourth PDZ domains). Found in a complex with PTPN13 and TRIP6. Interacts (via PDZ domain) with ACTN1 and ACTN2 (via C-terminal SDL residues). Interacts (via PDZ domain) with TRIP6 (via the second LIM domain or via the third LIM domain plus C-terminus). Interacts (via LIM domain) with GRIA1 (via C-terminus); this interaction as well as the interaction with alpha-actinin is required for their colocalization in early endosomes. Interacts with PDLIM1. Forms (via LIM domain) a heterodimer with PDLIM3. Interacts directly with SRC (via kinase domain and to a lesser extent the SH2 domain). Isoform 2 interacts with NQO1. NQO1-stabilized isoform 2 heterodimerizes with isoform 1. Phosphorylated on tyrosine residue(s). Can be dephosphorylated by PTPN13. In terms of tissue distribution, found in brain.

It is found in the cytoplasm. It localises to the cytoskeleton. The protein localises to the nucleus. Its subcellular location is the perinuclear region. The protein resides in the cell projection. It is found in the lamellipodium. It localises to the dendritic spine. The protein localises to the early endosome membrane. Its subcellular location is the recycling endosome membrane. The protein resides in the synapse. It is found in the synaptosome. Its function is as follows. Suppresses SRC activation by recognizing and binding to active SRC and facilitating PTPN13-mediated dephosphorylation of SRC 'Tyr-419' leading to its inactivation. Inactivated SRC dissociates from this protein allowing the initiation of a new SRC inactivation cycle. Involved in reorganization of the actin cytoskeleton. In nonmuscle cells, binds to ACTN1 (alpha-actinin-1), increases the affinity of ACTN1 to F-actin (filamentous actin), and promotes formation of actin stress fibers. Involved in regulation of the synaptic AMPA receptor transport in dendritic spines of hippocampal pyramidal neurons directing the receptors toward an insertion at the postsynaptic membrane. Links endosomal surface-internalized GRIA1-containing AMPA receptors to the alpha-actinin/actin cytoskeleton. Increases AMPA receptor-mediated excitatory postsynaptic currents in neurons. Functionally, involved in reorganization of the actin cytoskeleton and in regulation of cell migration. In response to oxidative stress, binds to NQO1, which stabilizes it and protects it from ubiquitin-independent degradation by the core 20S proteasome. Stabilized protein is able to heterodimerize with isoform 1 changing the subcellular location of it from cytoskeleton and nuclei to cytosol, leading to loss of isoforms 1 ability to induce formation of actin stress fibers. Counteracts the effects produced by isoform 1 on organization of actin cytoskeleton and cell motility to fine-tune actin cytoskeleton rearrangement and to attenuate cell migration. This Homo sapiens (Human) protein is PDZ and LIM domain protein 4 (PDLIM4).